The following is a 1978-amino-acid chain: Sodium channel protein type 8 subunit alpha (1978 aa).

2 disordered regions span residues 1 to 20 (MAAR…FTPE) and 28 to 62 (RIAE…LEAG). Residues 1–132 (MAARLLAPPG…RIAIKILIHS (132 aa)) lie on the Cytoplasmic side of the membrane. The segment covering 28–61 (RIAESKLKKPPKADGSHREDDEDSKPKPNSDLEA) has biased composition (basic and acidic residues). The stretch at 114-442 (ILSPFNLIRR…KAMLEQLKKQ (329 aa)) is one I repeat. The helical transmembrane segment at 133–151 (VFSMIIMCTILTNCVFMTF) threads the bilayer. The Extracellular portion of the chain corresponds to 152-158 (SNPPEWS). Residues 159–179 (KNVEYTFTGIYTFESLVKIIA) form a helical membrane-spanning segment. Topologically, residues 180–193 (RGFCIDGFTFLRDP) are cytoplasmic. The helical transmembrane segment at 194-211 (WNWLDFSVIMMAYVTEFV) threads the bilayer. Topologically, residues 212–217 (DLGNVS) are extracellular. An N-linked (GlcNAc...) asparagine glycan is attached at Asn-215. The helical transmembrane segment at 218–234 (ALRTFRVLRALKTISVI) threads the bilayer. Over 235-253 (PGLKTIVGALIQSVKKLSD) the chain is Cytoplasmic. Residues 254–273 (VMILTVFCLSVFALIGLQLF) traverse the membrane as a helical segment. Topologically, residues 274 to 355 (MGNLRNKCVV…PNYGYTSFDT (82 aa)) are extracellular. Cys-281 and Cys-333 are oxidised to a cystine. N-linked (GlcNAc...) asparagine glycans are attached at residues Asn-289, Asn-295, Asn-308, and Asn-326. An intramembrane region (pore-forming) is located at residues 356-380 (FSWAFLALFRLMTQDYWENLYQLTL). Glu-373 is a Na(+) binding site. Over 381–387 (RAAGKTY) the chain is Extracellular. A helical membrane pass occupies residues 388-408 (MIFFVLVIFVGSFYLVNLILA). The Cytoplasmic segment spans residues 409 to 751 (VVAMAYEEQN…EIVNLIVMDP (343 aa)). Disordered regions lie at residues 446-530 (AQAA…KAFR) and 576-597 (DPGS…SEGR). Low complexity predominate over residues 473–486 (SPRSSSELSKLSSK). Positions 489–500 (KERRNRRKKRKQ) are enriched in basic residues. Composition is skewed to basic and acidic residues over residues 501–530 (KELS…KAFR) and 586–597 (DEHSTVEESEGR). Phosphoserine is present on residues Ser-518 and Ser-520. The stretch at 733 to 1005 (CHPYWIKLKE…QISVIRIKKG (273 aa)) is one II repeat. A helical membrane pass occupies residues 752–770 (FVDLAITICIVLNTLFMAM). The Extracellular portion of the chain corresponds to 771–781 (EHHPMTPQFEH). A helical membrane pass occupies residues 782–801 (VLAVGNLVFTGIFTAEMFLK). Residues 802-815 (LIAMDPYYYFQEGW) are Cytoplasmic-facing. Residues 816–835 (NIFDGFIVSLSLMELSLADV) traverse the membrane as a helical segment. At 836 to 837 (EG) the chain is on the extracellular side. A helical transmembrane segment spans residues 838–855 (LSVLRSFRLLRVFKLAKS). The Cytoplasmic portion of the chain corresponds to 856–871 (WPTLNMLIKIIGNSVG). Residues 872 to 890 (ALGNLTLVLAIIVFIFAVV) traverse the membrane as a helical segment. The Extracellular portion of the chain corresponds to 891 to 919 (GMQLFGKSYKECVCKINQECKLPRWHMND). Cys-904 and Cys-910 are joined by a disulfide. Residues 920–940 (FFHSFLIVFRVLCGEWIETMW) constitute an intramembrane region (pore-forming). Na(+) is bound by residues Glu-934 and Glu-937. The Extracellular segment spans residues 941 to 953 (DCMEVAGQAMCLI). An intrachain disulfide couples Cys-942 to Cys-951. Residues 954–974 (VFMMVMVIGNLVVLNLFLALL) form a helical membrane-spanning segment. Over 975-1197 (LSSFSADNLA…TCFLIVEHNW (223 aa)) the chain is Cytoplasmic. The interval 1105–1146 (NLNTEDVSSESDPEGSKDKLDDTSSSEGSTIDIKPEVEEVPV) is disordered. Residues 1178-1493 (LGKSWWILRK…KKYYNAMKKL (316 aa)) form an III repeat. A helical membrane pass occupies residues 1198-1215 (FETFIIFMILLSSGALAF). The Extracellular segment spans residues 1216-1228 (EDIYIEQRKTIRT). The chain crosses the membrane as a helical span at residues 1229-1247 (ILEYADKVFTYIFILEMLL). Residues 1248 to 1261 (KWTAYGFVKFFTNA) lie on the Cytoplasmic side of the membrane. Residues 1262–1280 (WCWLDFLIVAVSLVSLIAN) form a helical membrane-spanning segment. The Extracellular segment spans residues 1281 to 1288 (ALGYSELG). The chain crosses the membrane as a helical span at residues 1289-1307 (AIKSLRTLRALRPLRALSR). The Cytoplasmic portion of the chain corresponds to 1308–1324 (FEGMRVVVNALVGAIPS). Residues 1325–1344 (IMNVLLVCLIFWLIFSIMGV) form a helical membrane-spanning segment. At 1345–1397 (NLFAGKYHYCFNETSEIRFEIDIVNNKTDCEKLMEGNSTEIRWKNVKINFDNV) the chain is on the extracellular side. A disulfide bridge connects residues Cys-1354 and Cys-1374. N-linked (GlcNAc...) asparagine glycans are attached at residues Asn-1356, Asn-1370, and Asn-1381. The pore-forming intramembrane region spans 1398–1419 (GAGYLALLQVATFKGWMDIMYA). Residues 1420–1436 (AVDSRKPDEQPDYEGNI) lie on the Extracellular side of the membrane. Residues 1437-1458 (YMYIYFVIFIIFGSFFTLNLFI) form a helical membrane-spanning segment. The Cytoplasmic segment spans residues 1459 to 1521 (GVIIDNFNQQ…IVFDFVTQQA (63 aa)). Ser-1495 carries the post-translational modification Phosphoserine; by PKC. Residues 1502–1799 (IPRPLNKIQG…WEKFDPDATQ (298 aa)) form an IV repeat. A helical membrane pass occupies residues 1522–1539 (FDIVIMMLICLNMVTMMV). The Extracellular segment spans residues 1540–1550 (ETDTQSKQMEN). A helical membrane pass occupies residues 1551–1569 (ILYWINLVFVIFFTCECVL). Topologically, residues 1570–1581 (KMFALRHYYFTI) are cytoplasmic. Residues 1582–1599 (GWNIFDFVVVILSIVGMF) form a helical membrane-spanning segment. Topologically, residues 1600–1612 (LADIIEKYFVSPT) are extracellular. A helical membrane pass occupies residues 1613 to 1629 (LFRVIRLARIGRILRLI). The Cytoplasmic segment spans residues 1630–1648 (KGAKGIRTLLFALMMSLPA). A helical membrane pass occupies residues 1649–1666 (LFNIGLLLFLVMFIFSIF). Topologically, residues 1667-1688 (GMSNFAYVKHEAGIDDMFNFET) are extracellular. Residues 1689 to 1711 (FGNSMICLFQITTSAGWDGLLLP) constitute an intramembrane region (pore-forming). Residues 1712-1740 (ILNRPPDCSLDKEHPGSGFKGDCGNPSVG) are Extracellular-facing. Cys-1719 and Cys-1734 are disulfide-bonded. Residues 1741–1763 (IFFFVSYIIISFLIVVNMYIAII) form a helical membrane-spanning segment. Over 1764 to 1978 (LENFSVATEE…RQKEVRESKC (215 aa)) the chain is Cytoplasmic. The 30-residue stretch at 1893-1922 (EEVSAVVLQRAYRGHLARRGFICRKMASNK) folds into the IQ domain. Residues 1923-1978 (LENGGTHRDKKESTPSTASLPSYDSVTKPDKEKQQRAEEGRRERAKRQKEVRESKC) form a disordered region. Over residues 1936–1947 (TPSTASLPSYDS) the composition is skewed to polar residues. A compositionally biased stretch (basic and acidic residues) spans 1949–1978 (TKPDKEKQQRAEEGRRERAKRQKEVRESKC).

This sequence belongs to the sodium channel (TC 1.A.1.10) family. Nav1.6/SCN8A subfamily. In terms of assembly, the voltage-sensitive sodium channel consists of an ion-conducting pore-forming alpha subunit regulated by one or more beta-1 (SCN1B), beta-2 (SCN2B), beta-3 (SCN3B) and/or beta-4 (SCN4B) subunits. Beta-1 (SCN1B) and beta-3 (SCN3B) are non-covalently associated with alpha, while beta-2 (SCN2B) and beta-4 (SCN4B) are covalently linked by disulfide bonds. Interacts with NEDD4 and NEDD4L. Interacts with FGF13. Interacts with FGF14, GBG3, GBB2 and SCN1B. Interacts with TMEM233. Interacts with the conotoxin GVIIJ. Interacts with CALM1; the interaction modulates the inactivation rate of SCN8A. May be ubiquitinated by NEDD4L; which would promote its endocytosis. Post-translationally, phosphorylation at Ser-1495 by PKC in a highly conserved cytoplasmic loop slows inactivation of the sodium channel and reduces peak sodium currents. Isoform 1 is highly expressed in brain, moderately in spinal cord, and at low levels in dorsal root ganglia, nodose ganglia and superior cervical ganglia. Not detected in sciatic nerve and non-neuronal tissues. Isoform 2 is hardly detectable, if at all, in brain, expressed at low levels in spinal cord and at highest levels in dorsal root ganglia.

Its subcellular location is the cell membrane. The protein localises to the cell projection. It localises to the axon. It carries out the reaction Na(+)(in) = Na(+)(out). Functionally, pore-forming subunit of a voltage-gated sodium channel complex assuming opened or closed conformations in response to the voltage difference across membranes and through which sodium ions selectively pass along their electrochemical gradient. Contributes to neuronal excitability by regulating action potential threshold and propagation. The chain is Sodium channel protein type 8 subunit alpha from Rattus norvegicus (Rat).